The following is a 358-amino-acid chain: Histidinol-phosphate aminotransferase (358 aa).

Lys218 carries the post-translational modification N6-(pyridoxal phosphate)lysine.

This sequence belongs to the class-II pyridoxal-phosphate-dependent aminotransferase family. Histidinol-phosphate aminotransferase subfamily. Homodimer. Pyridoxal 5'-phosphate is required as a cofactor.

The catalysed reaction is L-histidinol phosphate + 2-oxoglutarate = 3-(imidazol-4-yl)-2-oxopropyl phosphate + L-glutamate. It participates in amino-acid biosynthesis; L-histidine biosynthesis; L-histidine from 5-phospho-alpha-D-ribose 1-diphosphate: step 7/9. This chain is Histidinol-phosphate aminotransferase, found in Dehalococcoides mccartyi (strain CBDB1).